A 198-amino-acid chain; its full sequence is Transcriptional regulator GfcR (198 aa).

This sequence belongs to the purine/pyrimidine phosphoribosyltransferase family. GfcR subfamily.

This is Transcriptional regulator GfcR from Thermoplasma acidophilum (strain ATCC 25905 / DSM 1728 / JCM 9062 / NBRC 15155 / AMRC-C165).